We begin with the raw amino-acid sequence, 270 residues long: Formamidopyrimidine-DNA glycosylase (270 aa).

Residue proline 2 is the Schiff-base intermediate with DNA of the active site. The Proton donor role is filled by glutamate 3. Residue lysine 58 is the Proton donor; for beta-elimination activity of the active site. Residues histidine 91, arginine 110, and lysine 151 each contribute to the DNA site. Residues 236 to 270 form an FPG-type zinc finger; it reads FVYGRGGQPCKVCGTTLREIKLGQRASVYCPKCQR. The active-site Proton donor; for delta-elimination activity is arginine 260.

This sequence belongs to the FPG family. As to quaternary structure, monomer. The cofactor is Zn(2+).

The enzyme catalyses Hydrolysis of DNA containing ring-opened 7-methylguanine residues, releasing 2,6-diamino-4-hydroxy-5-(N-methyl)formamidopyrimidine.. It catalyses the reaction 2'-deoxyribonucleotide-(2'-deoxyribose 5'-phosphate)-2'-deoxyribonucleotide-DNA = a 3'-end 2'-deoxyribonucleotide-(2,3-dehydro-2,3-deoxyribose 5'-phosphate)-DNA + a 5'-end 5'-phospho-2'-deoxyribonucleoside-DNA + H(+). Its function is as follows. Involved in base excision repair of DNA damaged by oxidation or by mutagenic agents. Acts as a DNA glycosylase that recognizes and removes damaged bases. Has a preference for oxidized purines, such as 7,8-dihydro-8-oxoguanine (8-oxoG). Has AP (apurinic/apyrimidinic) lyase activity and introduces nicks in the DNA strand. Cleaves the DNA backbone by beta-delta elimination to generate a single-strand break at the site of the removed base with both 3'- and 5'-phosphates. The sequence is that of Formamidopyrimidine-DNA glycosylase from Pseudomonas savastanoi pv. phaseolicola (strain 1448A / Race 6) (Pseudomonas syringae pv. phaseolicola (strain 1448A / Race 6)).